A 302-amino-acid polypeptide reads, in one-letter code: Sulfate adenylyltransferase subunit 2 (302 aa).

The segment at 280-302 (RQGRVIDHDSSGSMEKKKREGYF) is disordered.

The protein belongs to the PAPS reductase family. CysD subfamily. As to quaternary structure, heterodimer composed of CysD, the smaller subunit, and CysN.

The enzyme catalyses sulfate + ATP + H(+) = adenosine 5'-phosphosulfate + diphosphate. The protein operates within sulfur metabolism; hydrogen sulfide biosynthesis; sulfite from sulfate: step 1/3. With CysN forms the ATP sulfurylase (ATPS) that catalyzes the adenylation of sulfate producing adenosine 5'-phosphosulfate (APS) and diphosphate, the first enzymatic step in sulfur assimilation pathway. APS synthesis involves the formation of a high-energy phosphoric-sulfuric acid anhydride bond driven by GTP hydrolysis by CysN coupled to ATP hydrolysis by CysD. In Shewanella amazonensis (strain ATCC BAA-1098 / SB2B), this protein is Sulfate adenylyltransferase subunit 2.